Here is a 133-residue protein sequence, read N- to C-terminus: Small ribosomal subunit protein uS19 (133 aa).

The protein belongs to the universal ribosomal protein uS19 family.

In terms of biological role, protein S19 forms a complex with S13 that binds strongly to the 16S ribosomal RNA. The chain is Small ribosomal subunit protein uS19 from Thermococcus onnurineus (strain NA1).